The following is a 420-amino-acid chain: Exodeoxyribonuclease 7 large subunit (420 aa).

It belongs to the XseA family. In terms of assembly, heterooligomer composed of large and small subunits.

The protein localises to the cytoplasm. It carries out the reaction Exonucleolytic cleavage in either 5'- to 3'- or 3'- to 5'-direction to yield nucleoside 5'-phosphates.. Its function is as follows. Bidirectionally degrades single-stranded DNA into large acid-insoluble oligonucleotides, which are then degraded further into small acid-soluble oligonucleotides. The sequence is that of Exodeoxyribonuclease 7 large subunit from Helicobacter pylori (strain Shi470).